A 344-amino-acid polypeptide reads, in one-letter code: Dihydroorotate dehydrogenase (quinone) (344 aa).

Residues 61–65 and Thr85 contribute to the FMN site; that span reads AGLDK. A substrate-binding site is contributed by Lys65. 110 to 114 contacts substrate; sequence NRMGF. Asn138 and Asn171 together coordinate FMN. Substrate is bound at residue Asn171. Catalysis depends on Ser174, which acts as the Nucleophile. Asn176 serves as a coordination point for substrate. Lys216 and Thr244 together coordinate FMN. 245–246 contributes to the substrate binding site; it reads NT. FMN is bound by residues Gly267, Gly296, and 317-318; that span reads YS.

The protein belongs to the dihydroorotate dehydrogenase family. Type 2 subfamily. In terms of assembly, monomer. The cofactor is FMN.

It is found in the cell membrane. The enzyme catalyses (S)-dihydroorotate + a quinone = orotate + a quinol. It functions in the pathway pyrimidine metabolism; UMP biosynthesis via de novo pathway; orotate from (S)-dihydroorotate (quinone route): step 1/1. In terms of biological role, catalyzes the conversion of dihydroorotate to orotate with quinone as electron acceptor. This Psychrobacter sp. (strain PRwf-1) protein is Dihydroorotate dehydrogenase (quinone).